The sequence spans 874 residues: Alanine--tRNA ligase (874 aa).

Positions 564, 568, 665, and 669 each coordinate Zn(2+).

It belongs to the class-II aminoacyl-tRNA synthetase family. Requires Zn(2+) as cofactor.

It is found in the cytoplasm. The catalysed reaction is tRNA(Ala) + L-alanine + ATP = L-alanyl-tRNA(Ala) + AMP + diphosphate. Catalyzes the attachment of alanine to tRNA(Ala) in a two-step reaction: alanine is first activated by ATP to form Ala-AMP and then transferred to the acceptor end of tRNA(Ala). Also edits incorrectly charged Ser-tRNA(Ala) and Gly-tRNA(Ala) via its editing domain. The sequence is that of Alanine--tRNA ligase from Acidovorax sp. (strain JS42).